Consider the following 220-residue polypeptide: MRVIVITVFLFIGAAIAEDVGIGLLSEAEAYVSPKLKKFITPCTSHVGETCSTTSSSGSEALMQNQGGLLFAFRFYGEMLGRPCAQLYQTSVTNLQVEPSEVFPRKNNPQGGRKSKLDDHQVQPLSFRLPPFRLPPMPKLGPTSPIIRTIPSPPIAPRDLSLIETIQLRTALRTCTHVTARTCLTAPNVATSDLEACLTPSMNQCIYPRGAEYGSPPIRA.

The N-terminal stretch at 1 to 17 is a signal peptide; that stretch reads MRVIVITVFLFIGAAIA. The disordered stretch occupies residues 99–120; sequence PSEVFPRKNNPQGGRKSKLDDH.

It belongs to the nodulin 20 family.

In Glycine max (Soybean), this protein is Nodulin-23.